The sequence spans 280 residues: F-box only protein 27 (280 aa).

The disordered stretch occupies residues 1–26; it reads MGAWASRGRAARVPAPEPESEPEEAL. An F-box domain is found at 25-72; it reads ALDLSQLPPELLLVVLSHVPPRTLLGRCRQVCRGWRALVDGQALWLLI. One can recognise an FBA domain in the interval 100–277; the sequence is PCPLGRFCAR…VTNSSVIVRV (178 aa).

As to quaternary structure, part of a SCF (SKP1-cullin-F-box) protein ligase complex. Interacts with SKP1 and CUL1.

Functionally, substrate-recognition component of the SCF (SKP1-CUL1-F-box protein)-type E3 ubiquitin ligase complex. Able to recognize and bind complex-type oligosaccharides. This chain is F-box only protein 27 (FBXO27), found in Macaca fascicularis (Crab-eating macaque).